The sequence spans 141 residues: Large ribosomal subunit protein uL11 (141 aa).

The protein belongs to the universal ribosomal protein uL11 family. Part of the ribosomal stalk of the 50S ribosomal subunit. Interacts with L10 and the large rRNA to form the base of the stalk. L10 forms an elongated spine to which L12 dimers bind in a sequential fashion forming a multimeric L10(L12)X complex. One or more lysine residues are methylated.

Its function is as follows. Forms part of the ribosomal stalk which helps the ribosome interact with GTP-bound translation factors. This is Large ribosomal subunit protein uL11 from Levilactobacillus brevis (strain ATCC 367 / BCRC 12310 / CIP 105137 / JCM 1170 / LMG 11437 / NCIMB 947 / NCTC 947) (Lactobacillus brevis).